An 88-amino-acid chain; its full sequence is Alpha-latrotoxin associated low molecular weight protein 2 (88 aa).

The signal sequence occupies residues 1 to 19 (MLKLICIVFLVTVLTFVVG). Intrachain disulfides connect Cys30–Cys66, Cys46–Cys62, and Cys49–Cys75.

This sequence belongs to the arthropod CHH/MIH/GIH/VIH hormone family. As to expression, expressed by the venom gland.

It localises to the secreted. In terms of biological role, may increase the toxicity of alpha-latrotoxin and/or other venom components. Is non-toxic to mice and to the cockroach Periplaneta americana. The chain is Alpha-latrotoxin associated low molecular weight protein 2 from Latrodectus geometricus (Brown widow spider).